A 189-amino-acid chain; its full sequence is GTP cyclohydrolase 1 (189 aa).

Zn(2+) is bound by residues Cys-76, His-79, and Cys-149.

Belongs to the GTP cyclohydrolase I family. In terms of assembly, homomer.

It carries out the reaction GTP + H2O = 7,8-dihydroneopterin 3'-triphosphate + formate + H(+). It participates in cofactor biosynthesis; 7,8-dihydroneopterin triphosphate biosynthesis; 7,8-dihydroneopterin triphosphate from GTP: step 1/1. In Dehalococcoides mccartyi (strain ATCC BAA-2100 / JCM 16839 / KCTC 5957 / BAV1), this protein is GTP cyclohydrolase 1.